The following is a 1360-amino-acid chain: DNA-directed RNA polymerase subunit beta (1360 aa).

Belongs to the RNA polymerase beta chain family. In terms of assembly, the RNAP catalytic core consists of 2 alpha, 1 beta, 1 beta' and 1 omega subunit. When a sigma factor is associated with the core the holoenzyme is formed, which can initiate transcription.

The catalysed reaction is RNA(n) + a ribonucleoside 5'-triphosphate = RNA(n+1) + diphosphate. Its function is as follows. DNA-dependent RNA polymerase catalyzes the transcription of DNA into RNA using the four ribonucleoside triphosphates as substrates. The protein is DNA-directed RNA polymerase subunit beta of Magnetococcus marinus (strain ATCC BAA-1437 / JCM 17883 / MC-1).